Reading from the N-terminus, the 1177-residue chain is DNA-directed RNA polymerase subunit beta (1177 aa).

Residues 1147–1161 (DDTEIEMRDTEDDDD) are compositionally biased toward acidic residues. The tract at residues 1147-1177 (DDTEIEMRDTEDDDDHQSADKLNVEVETTKE) is disordered. Positions 1162–1177 (HQSADKLNVEVETTKE) are enriched in basic and acidic residues.

This sequence belongs to the RNA polymerase beta chain family. In terms of assembly, the RNAP catalytic core consists of 2 alpha, 1 beta, 1 beta' and 1 omega subunit. When a sigma factor is associated with the core the holoenzyme is formed, which can initiate transcription.

The catalysed reaction is RNA(n) + a ribonucleoside 5'-triphosphate = RNA(n+1) + diphosphate. Its function is as follows. DNA-dependent RNA polymerase catalyzes the transcription of DNA into RNA using the four ribonucleoside triphosphates as substrates. The protein is DNA-directed RNA polymerase subunit beta of Bacillus thuringiensis (strain Al Hakam).